We begin with the raw amino-acid sequence, 85 residues long: U4-theraphotoxin-Hhn1a (85 aa).

An N-terminal signal peptide occupies residues 1-22 (MKVTLIAILTCATVLVLHTTAA). Residues 23–48 (EELEAESQLMEVGMPDTELAAVDEER) constitute a propeptide that is removed on maturation. 3 cysteine pairs are disulfide-bonded: C52–C66, C56–C77, and C71–C82.

Belongs to the neurotoxin 12 (Hwtx-2) family. 02 (Hwtx-2) subfamily. Monomer. Expressed by the venom gland.

It is found in the secreted. Its function is as follows. Neurotoxin active on both insects and mammals. In Cyriopagopus hainanus (Chinese bird spider), this protein is U4-theraphotoxin-Hhn1a.